The sequence spans 440 residues: N-succinylarginine dihydrolase (440 aa).

Substrate is bound by residues 17 to 26, Asn-108, and 135 to 136; these read GGLSPGNLAS and HR. The interval 17-37 is disordered; it reads GGLSPGNLASQSHVGEPSHPR. Residue Glu-172 is part of the active site. Arg-210 is a binding site for substrate. The active site involves His-246. Positions 248 and 358 each coordinate substrate. The active-site Nucleophile is the Cys-364.

Belongs to the succinylarginine dihydrolase family. In terms of assembly, homodimer.

It carries out the reaction N(2)-succinyl-L-arginine + 2 H2O + 2 H(+) = N(2)-succinyl-L-ornithine + 2 NH4(+) + CO2. Its pathway is amino-acid degradation; L-arginine degradation via AST pathway; L-glutamate and succinate from L-arginine: step 2/5. In terms of biological role, catalyzes the hydrolysis of N(2)-succinylarginine into N(2)-succinylornithine, ammonia and CO(2). The chain is N-succinylarginine dihydrolase from Myxococcus xanthus (strain DK1622).